The following is a 693-amino-acid chain: CREB-regulated transcription coactivator 2 (693 aa).

Residues 1–20 show a composition bias toward polar residues; sequence MATSGANGPGSATASASNPR. The tract at residues 1–30 is disordered; it reads MATSGANGPGSATASASNPRKFSEKIALQK. A2 carries the N-acetylalanine modification. R51 carries the asymmetric dimethylarginine; by PRMT6 modification. 3 positions are modified to phosphoserine: S70, S86, and S90. Asymmetric dimethylarginine; by PRMT6 is present on residues R99, R120, and R123. S136 is modified (phosphoserine). 2 positions are modified to asymmetric dimethylarginine; by PRMT6: R161 and R168. T169 is modified (phosphothreonine). S171 is subject to Phosphoserine. Positions 174 to 188 are enriched in polar residues; sequence ALHTSVMNPSPQDTY. The interval 174–210 is disordered; sequence ALHTSVMNPSPQDTYPSPAAPSVLPSRRGGCLDGETD. Residues 209-215 are required for interaction with COP1; that stretch reads TDSKVPA. A Glycyl lysine isopeptide (Lys-Gly) (interchain with G-Cter in SUMO2) cross-link involves residue K234. A Nuclear export signal motif is present at residues 271–287; that stretch reads TGGSLPDLTNLHFPPPL. Disordered regions lie at residues 271 to 307, 335 to 463, and 476 to 548; these read TGGS…GSST, HSPL…SPTL, and KLPT…QSYH. At S274 the chain carries Phosphoserine; by MARK2. S306 bears the Phosphoserine mark. The span at 339–351 shows a compositional bias: polar residues; that stretch reads SHPSFQSSLSNPN. 2 stretches are compositionally biased toward low complexity: residues 352-378 and 386-424; these read LQAS…SSLA and SLGH…PGAS. Phosphoserine occurs at positions 368, 393, 433, and 456. Over residues 447–463 the composition is skewed to polar residues; that stretch reads SQQQLPKQFSPTMSPTL. At Y488 the chain carries Phosphotyrosine. A phosphoserine mark is found at S489 and S492. Residue T501 is modified to Phosphothreonine. Residues S613 and S624 each carry the phosphoserine modification.

Belongs to the TORC family. Binds, as a tetramer, through its N-terminal region, with the bZIP domain of CREB1. 'Arg-314' in the bZIP domain of CREB1 is essential for this interaction. Interaction, via its C-terminal, with TAF4, enhances recruitment of TAF4 to CREB1. Interacts with SIK2. Interacts with 14-3-3 proteins, YWHAB and YWHAG. Interacts (probably when phosphorylated at Ser-171) with YWHAE. Interacts with calmodulin-dependent catalytic subunit PPP3CA/calcineurin A. Interaction with COP1 mediates nuclear export and degradation of CRTC2. In terms of processing, phosphorylation/dephosphorylation states of Ser-171 are required for regulating transduction of CREB activity. CRTCs/TORCs are inactive when phosphorylated, and active when dephosphorylated at this site. This primary site of phosphorylation, is regulated by cAMP and calcium levels and is dependent on the phosphorylation of SIKs (SIK1 and SIK2) by LKB1. Following adenylyl cyclase activation, dephosphorylated at Ser-171 by PPP3CA/calcineurin A resulting in CRTC2 dissociation from 14-3-3 proteins and PPP3CA. Both insulin and AMPK increase this phosphorylation of CRTC2 while glucagon suppresses it. Phosphorylation at Ser-274 by MARK2 is induced under low glucose conditions and dephosphorylated in response to glucose influx. Phosphorylation at Ser-274 promotes interaction with 14-3-3 proteins and translocation to the cytoplasm. Asymmetric dimethylation of arginine resisues by PRMT6 enhances the association of CRTC2 with CREB on the promoters of gluconeogenic genes.

The protein localises to the cytoplasm. Its subcellular location is the nucleus. Its function is as follows. Transcriptional coactivator for CREB1 which activates transcription through both consensus and variant cAMP response element (CRE) sites. Acts as a coactivator, in the SIK/TORC signaling pathway, being active when dephosphorylated and acts independently of CREB1 'Ser-133' phosphorylation. Enhances the interaction of CREB1 with TAF4. Regulates gluconeogenesis as a component of the LKB1/AMPK/TORC2 signaling pathway. Regulates the expression of specific genes such as the steroidogenic gene, StAR. Potent coactivator of PPARGC1A and inducer of mitochondrial biogenesis in muscle cells. The polypeptide is CREB-regulated transcription coactivator 2 (CRTC2) (Bos taurus (Bovine)).